A 258-amino-acid chain; its full sequence is Global transcriptional regulator CodY (258 aa).

The interval 1-156 is GAF domain; that stretch reads MSSLLSKTRR…SATIVGMEML (156 aa). A DNA-binding region (H-T-H motif) is located at residues 204-223; sequence ASKIADKVGITRSVIVNALR.

This sequence belongs to the CodY family.

Its subcellular location is the cytoplasm. Functionally, DNA-binding global transcriptional regulator which is involved in the adaptive response to starvation and acts by directly or indirectly controlling the expression of numerous genes in response to nutrient availability. During rapid exponential growth, CodY is highly active and represses genes whose products allow adaptation to nutrient depletion. This is Global transcriptional regulator CodY from Clostridium botulinum (strain Alaska E43 / Type E3).